Consider the following 545-residue polypeptide: Acetamidase (545 aa).

Catalysis depends on charge relay system residues Lys-130 and Ser-205. Ser-229 acts as the Acyl-ester intermediate in catalysis.

Belongs to the amidase family.

The catalysed reaction is a monocarboxylic acid amide + H2O = a monocarboxylate + NH4(+). It carries out the reaction acetamide + H2O = acetate + NH4(+). Its function is as follows. Allows acetamide to be used as a sole carbon or nitrogen source. The sequence is that of Acetamidase (amdS) from Aspergillus oryzae (strain ATCC 42149 / RIB 40) (Yellow koji mold).